We begin with the raw amino-acid sequence, 284 residues long: Tropomyosin (284 aa).

2 disordered regions span residues 1–27 and 99–131; these read MDAIKKKMQAMKVDRENAQDLAEQMEQ and YERSEEKLNSTTEKLEEASKAADESERNRKVLE. Positions 1 to 273 form a coiled coil; the sequence is MDAIKKKMQA…KERYKAISDD (273 aa). The segment covering 102 to 131 has biased composition (basic and acidic residues); that stretch reads SEEKLNSTTEKLEEASKAADESERNRKVLE.

It belongs to the tropomyosin family. In terms of assembly, homodimer.

In terms of biological role, tropomyosin, in association with the troponin complex, plays a central role in the calcium dependent regulation of muscle contraction. This chain is Tropomyosin, found in Mimachlamys nobilis (Noble scallop).